Reading from the N-terminus, the 298-residue chain is UDP-3-O-acyl-N-acetylglucosamine deacetylase (298 aa).

Residues His-80, His-239, and Asp-243 each contribute to the Zn(2+) site. Residue His-266 is the Proton donor of the active site.

Belongs to the LpxC family. Zn(2+) serves as cofactor.

The catalysed reaction is a UDP-3-O-[(3R)-3-hydroxyacyl]-N-acetyl-alpha-D-glucosamine + H2O = a UDP-3-O-[(3R)-3-hydroxyacyl]-alpha-D-glucosamine + acetate. It functions in the pathway glycolipid biosynthesis; lipid IV(A) biosynthesis; lipid IV(A) from (3R)-3-hydroxytetradecanoyl-[acyl-carrier-protein] and UDP-N-acetyl-alpha-D-glucosamine: step 2/6. In terms of biological role, catalyzes the hydrolysis of UDP-3-O-myristoyl-N-acetylglucosamine to form UDP-3-O-myristoylglucosamine and acetate, the committed step in lipid A biosynthesis. In Blochmanniella floridana, this protein is UDP-3-O-acyl-N-acetylglucosamine deacetylase.